Here is a 269-residue protein sequence, read N- to C-terminus: Flagellar brake protein YcgR (269 aa).

The PilZ domain maps to glutamine 134–threonine 254.

It belongs to the YcgR family. As to quaternary structure, monomer. Interacts with the flagellar basal bodies.

The protein localises to the bacterial flagellum basal body. Its function is as follows. Acts as a flagellar brake, regulating swimming and swarming in a bis-(3'-5') cyclic diguanylic acid (c-di-GMP)-dependent manner. Binds 1 c-di-GMP dimer per subunit. Increasing levels of c-di-GMP lead to decreased motility. In Nitrosomonas eutropha (strain DSM 101675 / C91 / Nm57), this protein is Flagellar brake protein YcgR.